Reading from the N-terminus, the 221-residue chain is GTP cyclohydrolase III (221 aa).

The protein belongs to the archaeal-type GTP cyclohydrolase family.

It catalyses the reaction GTP + 3 H2O = 2-amino-5-formylamino-6-(5-phospho-D-ribosylamino)pyrimidin-4(3H)-one + 2 phosphate + 2 H(+). Its function is as follows. Catalyzes the formation of 2-amino-5-formylamino-6-ribofuranosylamino-4(3H)-pyrimidinone ribonucleotide monophosphate and inorganic phosphate from GTP. Also has an independent pyrophosphate phosphohydrolase activity. The chain is GTP cyclohydrolase III from Pyrobaculum aerophilum (strain ATCC 51768 / DSM 7523 / JCM 9630 / CIP 104966 / NBRC 100827 / IM2).